The following is a 176-amino-acid chain: MRLSLAAAISHGRVYRRLGLGPESRIHLLRNLLTGLVRHERIEATWARADEMRGYAEKLIDYGKLGDTNERAMRMADFWLTEKDLIPKLFKVLAPRFQGQNGNYTRMLQIPNRKEQDRAKMAVIEYKGNYLPPLPLPHRDSNLTLLNQLLLGLQQDLHHNQDASLHSSCTVQTPKT.

Residues 1–8 constitute a mitochondrion transit peptide; sequence MRLSLAAA.

Belongs to the bacterial ribosomal protein bL17 family. Component of the mitochondrial ribosome large subunit (39S) which comprises a 16S rRNA and about 50 distinct proteins.

Its subcellular location is the mitochondrion. The chain is Large ribosomal subunit protein bL17m (Mrpl17) from Mus musculus (Mouse).